The following is a 679-amino-acid chain: DNA ligase (679 aa).

NAD(+)-binding positions include 36–40 (DEYYD) and 94–95 (SL). Lys126 serves as the catalytic N6-AMP-lysine intermediate. 4 residues coordinate NAD(+): Arg147, Glu181, Lys299, and Lys323. Residues Cys415, Cys418, Cys433, and Cys438 each contribute to the Zn(2+) site. The region spanning 603-679 (IQSTKLENKT…DEEFLKKMLE (77 aa)) is the BRCT domain.

Belongs to the NAD-dependent DNA ligase family. LigA subfamily. Requires Mg(2+) as cofactor. Mn(2+) is required as a cofactor.

It catalyses the reaction NAD(+) + (deoxyribonucleotide)n-3'-hydroxyl + 5'-phospho-(deoxyribonucleotide)m = (deoxyribonucleotide)n+m + AMP + beta-nicotinamide D-nucleotide.. DNA ligase that catalyzes the formation of phosphodiester linkages between 5'-phosphoryl and 3'-hydroxyl groups in double-stranded DNA using NAD as a coenzyme and as the energy source for the reaction. It is essential for DNA replication and repair of damaged DNA. This Mycoplasmopsis pulmonis (strain UAB CTIP) (Mycoplasma pulmonis) protein is DNA ligase.